The following is a 129-amino-acid chain: Small ribosomal subunit protein uS12 (129 aa).

Asp89 is subject to 3-methylthioaspartic acid.

This sequence belongs to the universal ribosomal protein uS12 family. Part of the 30S ribosomal subunit. Contacts proteins S8 and S17. May interact with IF1 in the 30S initiation complex.

Functionally, with S4 and S5 plays an important role in translational accuracy. Interacts with and stabilizes bases of the 16S rRNA that are involved in tRNA selection in the A site and with the mRNA backbone. Located at the interface of the 30S and 50S subunits, it traverses the body of the 30S subunit contacting proteins on the other side and probably holding the rRNA structure together. The combined cluster of proteins S8, S12 and S17 appears to hold together the shoulder and platform of the 30S subunit. This chain is Small ribosomal subunit protein uS12, found in Rickettsia akari (strain Hartford).